The chain runs to 435 residues: MVLPTLAIVGRPNVGKSTIFNRILGERVSIVEDTPGVTRDRIYGKSEWLGKEFAVIDTGGIDLGDEPFLAQIKDQAEIAIDEADVILFLADIESGVTDADERVAQILYRAKKPVVLAVNKVDNPERRQDIYDFYSLGFGEPYPLSGTHGIGLGDVLDAVLAAFPSEDKSVEDDSIKFSLIGRPNVGKSSLVNAILGENRVIVSPIEGTTRDAIDTKFEAVDETFTMIDTAGIRKRGKVYENTEKYAVMRALRAIDRSDVVLFVINAEEGIREQDKKVAGYAHEAGRGIIIVVNKWDTVEKDNHTMKDFENLIRQEFQYLDYAPIIFVSAKTKQRLQSLPAMIVAVSENQTRRIQSSVLNDVLMDAITVTPTPTVNGKRLRIYYMTQVAVKPPTFVVFVNDPDLLHFSYERFLINQLRQAFDFSGTPIHIIARKRK.

EngA-type G domains follow at residues 4–167 (PTLA…PSED) and 175–350 (IKFS…ENQT). GTP-binding positions include 10–17 (GRPNVGKS), 57–61 (DTGGI), 119–122 (NKVD), 181–188 (GRPNVGKS), 228–232 (DTAGI), and 293–296 (NKWD). The region spanning 351–435 (RRIQSSVLND…PIHIIARKRK (85 aa)) is the KH-like domain.

It belongs to the TRAFAC class TrmE-Era-EngA-EngB-Septin-like GTPase superfamily. EngA (Der) GTPase family. As to quaternary structure, associates with the 50S ribosomal subunit.

GTPase that plays an essential role in the late steps of ribosome biogenesis. The sequence is that of GTPase Der from Lacticaseibacillus paracasei (strain ATCC 334 / BCRC 17002 / CCUG 31169 / CIP 107868 / KCTC 3260 / NRRL B-441) (Lactobacillus paracasei).